We begin with the raw amino-acid sequence, 413 residues long: Alpha-1-antitrypsin 1-1 (413 aa).

A signal peptide spans 1–24 (MTPSISWGLLLLAGLCCLVPSFLA). Asn64, Asn101, and Asn265 each carry an N-linked (GlcNAc...) asparagine glycan. An RCL region spans residues 368–387 (AVTVLQMVPMSMPPILRFDH).

The protein belongs to the serpin family.

It is found in the secreted. In terms of biological role, inhibitor of serine proteases. Its primary target is elastase, but it also has a moderate affinity for plasmin and thrombin. This chain is Alpha-1-antitrypsin 1-1 (Serpina1a), found in Mus musculus (Mouse).